A 260-amino-acid polypeptide reads, in one-letter code: Exosome complex component Rrp4 (260 aa).

Residues 59–128 (NDVVIGIVIV…SSMKVELALR (70 aa)) form the S1 motif domain. The KH domain occupies 136-194 (KTGQIIKVESVKVPRVIGHGGSMISMLKKETNCSIFVGQNGRIWIDGKDEDIELLSKAL).

The protein belongs to the RRP4 family. In terms of assembly, component of the archaeal exosome complex. Forms a trimer of Rrp4 and/or Csl4 subunits. The trimer associates with a hexameric ring-like arrangement composed of 3 Rrp41-Rrp42 heterodimers.

The protein localises to the cytoplasm. Its function is as follows. Non-catalytic component of the exosome, which is a complex involved in RNA degradation. Increases the RNA binding and the efficiency of RNA degradation. Confers strong poly(A) specificity to the exosome. The sequence is that of Exosome complex component Rrp4 from Methanosarcina acetivorans (strain ATCC 35395 / DSM 2834 / JCM 12185 / C2A).